We begin with the raw amino-acid sequence, 9518 residues long: Nonribosomal peptide synthetase ungA' (9518 aa).

The adenylation 1 stretch occupies residues 214-611 (ERARETPNAP…ARKDDQVKVR (398 aa)). The region spanning 738–814 (APRTEMEWRL…DLAEVARLEQ (77 aa)) is the Carrier 1 domain. At Ser775 the chain carries O-(pantetheine 4'-phosphoryl)serine. The condensation 1 stretch occupies residues 853–1250 (DLLPCSPLQE…EEVLRQISRE (398 aa)). An adenylation 2 region spans residues 1292-1695 (QRVQEQPDRP…GRKDTQVKIR (404 aa)). Residues 1822–1898 (LPQTELERRL…RLAHCSQTEQ (77 aa)) enclose the Carrier 2 domain. Position 1859 is an O-(pantetheine 4'-phosphoryl)serine (Ser1859). The tract at residues 1911–2336 (TFALSPIQQL…QRSLEVVAKE (426 aa)) is epimerization 1. The interval 2376–2803 (EDIYPCSPVQ…DNLQIASSQD (428 aa)) is condensation 2. The interval 2829-3224 (RIQQQPEAPA…NRKDNQVKIR (396 aa)) is adenylation 3. Residues 3352–3428 (APATASEQRL…DMAQTLKVES (77 aa)) enclose the Carrier 3 domain. Position 3389 is an O-(pantetheine 4'-phosphoryl)serine (Ser3389). The condensation 3 stretch occupies residues 3465 to 3869 (EDVLPCTPLQ…QVCKEASQYL (405 aa)). Residues 3906-4307 (QQAHQRPNAS…GRRDAQVKIR (402 aa)) form an adenylation 4 region. The Carrier 4 domain occupies 4436 to 4512 (TPTTITECRI…RLAACTTPVD (77 aa)). At Ser4473 the chain carries O-(pantetheine 4'-phosphoryl)serine. The segment at 4527–4954 (ALSPIQQLFV…EDAAQELPSL (428 aa)) is epimerization 2. The tract at residues 4990 to 5411 (VEDIYPCSPI…ANLISKEDLR (422 aa)) is condensation 4. The adenylation 5 stretch occupies residues 5433–5829 (SEQAQNQPDA…GRKDGQVKIR (397 aa)). One can recognise a Carrier 5 domain in the interval 5957-6033 (VASSPVELAL…QLAKNSGLQA (77 aa)). O-(pantetheine 4'-phosphoryl)serine is present on Ser5994. Positions 6050–6470 (ELSPIQRMFF…CEHSLVMAAH (421 aa)) are epimerization 3. A condensation 5 region spans residues 6512–6856 (VEDIYPCTPI…TGISVQNNAS (345 aa)). The segment at 6947–7338 (LRPNSSAIHA…GRKDSQVKVR (392 aa)) is adenylation 6. The Carrier 6 domain occupies 7464–7540 (LPRTEVEMQL…GLAPSAASQA (77 aa)). Ser7501 is modified (O-(pantetheine 4'-phosphoryl)serine). Residues 7555–7978 (ELSPIQQMFI…LQTAARELPH (424 aa)) form an epimerization 4 region. A condensation 6 region spans residues 8016 to 8444 (VEDIYPLTPI…QVDLAGRHDQ (429 aa)). Positions 8468–8867 (MQCQQRPDAT…SRKDAQVKIR (400 aa)) are adenylation 7. Positions 8995–9071 (PLTTEMEWRL…DMAHYLREGQ (77 aa)) constitute a Carrier 7 domain. At Ser9032 the chain carries O-(pantetheine 4'-phosphoryl)serine. Residues 9111–9454 (DVYPTTELQD…DNLEHDAGTS (344 aa)) are condensation 7.

Belongs to the NRP synthetase family.

Its pathway is secondary metabolite biosynthesis. Its function is as follows. Nonribosomal peptide synthetase; part of the gene cluster that mediates the biosynthesis of the unguisins, gamma-aminobutyric acid (GABA)-containing fungal cyclic heptapeptides with the amino acid sequence cyclo-(D-Ala1-D-Val2-L-Leu3-beta-MePhe4-D-Ala5-D-Trp6-GABA7) for unguisin H and cyclo-(D-Ala1-D-Ala2-L-Leu3-beta-MePhe4-D-Ala5-D-Trp6-GABA7) for unguisin I. UngA' is the main enzyme within the cluster which condenses the 7 residues using its respective 7 modules. The terminal condensation domain (Ct) is involved in cyclization with D-alanine and thereby releasing of unguisins H and I. The alanine racemase ungC' provides D-alanine, which is then accepted by the first adenylation domain of ungA', whereas the methyltransferase ungE' provides the (2R,3R)-beta-methylphenylalanine residue incorporated by the module 4. Finally, the hydrolase ungD' catalyzes the hydrolysis between the D-tryptophan and GABA residues of unguisins H and I to produce the corresponding linear peptides. The polypeptide is Nonribosomal peptide synthetase ungA' (Aspergillus campestris (strain IBT 28561)).